The following is an 85-amino-acid chain: Large ribosomal subunit protein bL27 (85 aa).

The span at 1–11 shows a compositional bias: polar residues; that stretch reads MASKASGGSTR. Residues 1–20 form a disordered region; that stretch reads MASKASGGSTRNGRDSISKR.

It belongs to the bacterial ribosomal protein bL27 family.

In Sulfurihydrogenibium sp. (strain YO3AOP1), this protein is Large ribosomal subunit protein bL27.